Consider the following 94-residue polypeptide: Co-chaperonin GroES (94 aa).

This sequence belongs to the GroES chaperonin family. In terms of assembly, heptamer of 7 subunits arranged in a ring. Interacts with the chaperonin GroEL.

It is found in the cytoplasm. In terms of biological role, together with the chaperonin GroEL, plays an essential role in assisting protein folding. The GroEL-GroES system forms a nano-cage that allows encapsulation of the non-native substrate proteins and provides a physical environment optimized to promote and accelerate protein folding. GroES binds to the apical surface of the GroEL ring, thereby capping the opening of the GroEL channel. In Streptococcus oralis, this protein is Co-chaperonin GroES.